We begin with the raw amino-acid sequence, 291 residues long: Hydroxysteroid 11-beta-dehydrogenase 1-like protein A (291 aa).

An N-terminal signal peptide occupies residues 1 to 18; that stretch reads MAGVKLLLLSLCVGYTAY. Residues 40 to 66, 91 to 92, and 118 to 120 contribute to the NADP(+) site; these read GSST…TARR, DM, and NHI. Residue S170 coordinates substrate. Y183 (proton acceptor) is an active-site residue. NADP(+) contacts are provided by residues 183 to 187 and 216 to 222; these read YCASK and GYIDTEN.

The protein belongs to the short-chain dehydrogenases/reductases (SDR) family.

Its subcellular location is the secreted. It carries out the reaction cortisone + NADPH + H(+) = cortisol + NADP(+). Functionally, unidirectional NADP(+)-dependent cortisol dehydrogenase (in vitro). The polypeptide is Hydroxysteroid 11-beta-dehydrogenase 1-like protein A (hsd11b1l-a) (Xenopus laevis (African clawed frog)).